We begin with the raw amino-acid sequence, 885 residues long: DDT domain-containing protein DDB_G0282237 (885 aa).

Residues 20–125 (EEYFVIKFTK…GEIVSFKKAN (106 aa)) enclose the WAC domain. Disordered stretches follow at residues 141-184 (ESDE…INAL), 201-264 (DDEN…SVRK), and 367-431 (LEDT…KENE). The span at 154 to 180 (SSSSSSTTTTTTTPTTPPTTTTTTSSS) shows a compositional bias: low complexity. Positions 210-264 (KNNGDTSSDKKGEKEKEKEKEKEKEKEKEKEKEKEKEKEKEKEKEKDSDTKSVRK) are enriched in basic and acidic residues. Residues 217–260 (SDKKGEKEKEKEKEKEKEKEKEKEKEKEKEKEKEKEKEKDSDTK) are a coiled coil. The segment covering 367–379 (LEDTEEESVDIES) has biased composition (acidic residues). Over residues 380–396 (NDNSNSNGNSNSNNNLD) the composition is skewed to low complexity. The DDT domain occupies 443–503 (SNTFGDFLMV…MKTIFTLPSY (61 aa)). A coiled-coil region spans residues 530–565 (FQNEVKRIAIEEKEKQEKLKQLEEQNIRMLNLANEL). 2 disordered regions span residues 562 to 632 (ANEL…WKEE) and 707 to 744 (KQDD…QKKP). Residues 567-577 (GSDDEDDEMKL) are compositionally biased toward acidic residues. Residues 578–603 (DEDGNEIKKDVEMKDNDGTKDTKKDD) are compositionally biased toward basic and acidic residues. Coiled coils occupy residues 593–628 (NDGT…GEEE) and 674–782 (ASEK…RDRN). Composition is skewed to acidic residues over residues 604-631 (EENE…EWKE) and 715-729 (AEDD…EEQQ).

The protein resides in the nucleus. In Dictyostelium discoideum (Social amoeba), this protein is DDT domain-containing protein DDB_G0282237.